Here is a 439-residue protein sequence, read N- to C-terminus: Histidinol dehydrogenase (439 aa).

Residues tyrosine 125, glutamine 187, and asparagine 210 each coordinate NAD(+). The substrate site is built by threonine 233, glutamine 255, and histidine 258. Positions 255 and 258 each coordinate Zn(2+). Catalysis depends on proton acceptor residues glutamate 323 and histidine 324. Substrate is bound by residues histidine 324, aspartate 357, glutamate 411, and histidine 416. Residue aspartate 357 participates in Zn(2+) binding. A Zn(2+)-binding site is contributed by histidine 416.

This sequence belongs to the histidinol dehydrogenase family. Requires Zn(2+) as cofactor.

The enzyme catalyses L-histidinol + 2 NAD(+) + H2O = L-histidine + 2 NADH + 3 H(+). It functions in the pathway amino-acid biosynthesis; L-histidine biosynthesis; L-histidine from 5-phospho-alpha-D-ribose 1-diphosphate: step 9/9. Catalyzes the sequential NAD-dependent oxidations of L-histidinol to L-histidinaldehyde and then to L-histidine. In Symbiobacterium thermophilum (strain DSM 24528 / JCM 14929 / IAM 14863 / T), this protein is Histidinol dehydrogenase.